The primary structure comprises 159 residues: Small ribosomal subunit protein uS17y (159 aa).

This sequence belongs to the universal ribosomal protein uS17 family.

Its subcellular location is the cytoplasm. The sequence is that of Small ribosomal subunit protein uS17y (RPS11B) from Arabidopsis thaliana (Mouse-ear cress).